The chain runs to 204 residues: Guanylate kinase (204 aa).

The Guanylate kinase-like domain occupies 18–198; it reads GKLIIFSAPS…AKAETLEVIK (181 aa). 25–32 serves as a coordination point for ATP; it reads APSGSGKS.

The protein belongs to the guanylate kinase family.

The protein localises to the cytoplasm. It catalyses the reaction GMP + ATP = GDP + ADP. Functionally, essential for recycling GMP and indirectly, cGMP. This chain is Guanylate kinase, found in Bacteroides thetaiotaomicron (strain ATCC 29148 / DSM 2079 / JCM 5827 / CCUG 10774 / NCTC 10582 / VPI-5482 / E50).